We begin with the raw amino-acid sequence, 374 residues long: Alanine racemase (374 aa).

The Proton acceptor; specific for D-alanine role is filled by Lys-34. Lys-34 carries the post-translational modification N6-(pyridoxal phosphate)lysine. Residue Arg-147 participates in substrate binding. The Proton acceptor; specific for L-alanine role is filled by Tyr-271. Met-319 is a binding site for substrate.

The protein belongs to the alanine racemase family. The cofactor is pyridoxal 5'-phosphate.

The enzyme catalyses L-alanine = D-alanine. It functions in the pathway amino-acid biosynthesis; D-alanine biosynthesis; D-alanine from L-alanine: step 1/1. Its function is as follows. Catalyzes the interconversion of L-alanine and D-alanine. May also act on other amino acids. This chain is Alanine racemase (alr), found in Haemophilus ducreyi (strain 35000HP / ATCC 700724).